Here is a 234-residue protein sequence, read N- to C-terminus: uncharacterized protein (234 aa).

Residue G68–S70 participates in L-glutamine binding. Residue C101 is the Nucleophile of the active site. Residues R131 and I167–R168 contribute to the L-glutamine site. Catalysis depends on charge relay system residues H208 and E210.

It belongs to the glutaminase PdxT/SNO family.

It is found in the cytoplasm. It catalyses the reaction L-glutamine + H2O = L-glutamate + NH4(+). This is an uncharacterized protein from Schizosaccharomyces pombe (strain 972 / ATCC 24843) (Fission yeast).